Consider the following 165-residue polypeptide: V-type proton ATPase subunit c2 (165 aa).

At Met-1 to Pro-12 the chain is on the lumenal side. Residues Phe-13–Gly-33 traverse the membrane as a helical segment. At Thr-34–Ser-55 the chain is on the cytoplasmic side. The helical transmembrane segment at Ile-56–Ile-76 threads the bilayer. Topologically, residues Ser-77–His-95 are lumenal. A helical membrane pass occupies residues Leu-96–Gly-117. Over Asp-118–Lys-129 the chain is Cytoplasmic. A helical membrane pass occupies residues Leu-130 to Leu-155. Topologically, residues Ser-156–Glu-165 are lumenal.

The protein belongs to the V-ATPase proteolipid subunit family. V-ATPase is a heteromultimeric enzyme composed of a peripheral catalytic V1 complex (components A to H) attached to an integral membrane V0 proton pore complex (components: a, c, c'', d and e). The proteolipid components c and c'' are present as a hexameric ring that forms the proton-conducting pore. In terms of tissue distribution, expressed in leaf, root, flower and silique, with lower expression in roots.

The protein localises to the vacuole membrane. Proton-conducting pore forming subunit of the membrane integral V0 complex of vacuolar ATPase. V-ATPase is responsible for acidifying a variety of intracellular compartments in eukaryotic cells. In Arabidopsis thaliana (Mouse-ear cress), this protein is V-type proton ATPase subunit c2 (VHA-c2).